Reading from the N-terminus, the 533-residue chain is Retinoic acid receptor RXR-beta (533 aa).

Residues 1–23 (MSWAARPPFLPQRHAAGQCGPVG) form a disordered region. A modulating region spans residues 1 to 204 (MSWAARPPFL…PGGPGAGKRL (204 aa)). Position 25 is an omega-N-methylarginine (R25). A disordered region spans residues 36-181 (WRRRRPWLDP…GSGPPEDVKP (146 aa)). The segment covering 46-61 (AAAAAAAVAGGEQQTP) has biased composition (low complexity). A compositionally biased stretch (basic and acidic residues) spans 67–82 (EAGRDGMGDSGRDSRS). Pro residues-rich tracts occupy residues 89 to 109 (NPLPQGVPPPSPPGPPLPPST) and 118 to 131 (APPPPPMPPPPLGS). The span at 132–143 (PFPVISSSMGSP) shows a compositional bias: low complexity. A compositionally biased stretch (pro residues) spans 144-153 (GLPPPAPPGF). 2 consecutive NR C4-type zinc fingers follow at residues 205-225 (CAICGDRSSGKHYGVYSCEGC) and 241-265 (CRDNKDCTVDKRQRNRCQYCRYQKC). The nuclear receptor DNA-binding region spans 205 to 270 (CAICGDRSSG…RYQKCLATGM (66 aa)). A hinge region spans residues 271–295 (KREAVQEERQRGKDKDGDGEGAGGA). The span at 276–288 (QEERQRGKDKDGD) shows a compositional bias: basic and acidic residues. Disordered regions lie at residues 276–299 (QEERQRGKDKDGDGEGAGGAPEEM) and 313–336 (QKSDQGVEGPGGTGGSGSSPNDPV). The region spanning 296-529 (PEEMPVDRIL…TFLMEMLEAP (234 aa)) is the NR LBD domain. Residues 320-329 (EGPGGTGGSG) are compositionally biased toward gly residues.

It belongs to the nuclear hormone receptor family. NR2 subfamily. Homodimer (in vitro). Heterodimer with other retinoic acid receptor family members. Binds DNA preferentially as a RAR/RXR heterodimer. Interacts with NR1H3. Interacts with AKAP13. In terms of tissue distribution, expressed in aortic endothelial cells (at protein level). Expressed in monocytes. Expressed in a variety of tumor cell lines.

It is found in the nucleus. The protein localises to the cytoplasm. Receptor for retinoic acid. Retinoic acid receptors bind as heterodimers to their target response elements in response to their ligands, all-trans or 9-cis retinoic acid, and regulate gene expression in various biological processes. The RAR/RXR heterodimers bind to the retinoic acid response elements (RARE). The protein is Retinoic acid receptor RXR-beta (RXRB) of Homo sapiens (Human).